A 533-amino-acid polypeptide reads, in one-letter code: Peptide chain release factor 3 (533 aa).

Residues 9-284 (ARRRTFAIIS…ALCQLSPPPL (276 aa)) form the tr-type G domain. GTP contacts are provided by residues 18–25 (SHPDAGKT), 95–99 (DTPGH), and 149–152 (NKLD).

This sequence belongs to the TRAFAC class translation factor GTPase superfamily. Classic translation factor GTPase family. PrfC subfamily.

The protein localises to the cytoplasm. Its function is as follows. Increases the formation of ribosomal termination complexes and stimulates activities of RF-1 and RF-2. It binds guanine nucleotides and has strong preference for UGA stop codons. It may interact directly with the ribosome. The stimulation of RF-1 and RF-2 is significantly reduced by GTP and GDP, but not by GMP. This is Peptide chain release factor 3 from Cupriavidus pinatubonensis (strain JMP 134 / LMG 1197) (Cupriavidus necator (strain JMP 134)).